A 697-amino-acid polypeptide reads, in one-letter code: Sentrin-specific protease (697 aa).

A compositionally biased stretch (basic and acidic residues) spans 1 to 14 (MSRRSDLSDKDSQS). Disordered regions lie at residues 1 to 47 (MSRR…QGLG) and 365 to 387 (SEES…SDSY). The Nuclear localization signal signature appears at 15-19 (RKRHW). The Nuclear localization signal motif lies at 462 to 467 (KVEKKK). Residues 501–664 (IQICKKDLAT…VFSCQFGEWA (164 aa)) are protease. Catalysis depends on residues H585, D602, and C653.

This sequence belongs to the peptidase C48 family.

Its subcellular location is the nucleus envelope. In terms of biological role, protease that deconjugates smo-1 from targeted proteins and may catalyze the processing of smo-1 to its mature form. The polypeptide is Sentrin-specific protease (ulp-1) (Caenorhabditis elegans).